The chain runs to 186 residues: Inner membrane-spanning protein YciB (186 aa).

Helical transmembrane passes span 10-30 (IILFFAAFKVWGIYVATAVAI), 47-67 (VEPLQWLSLGVIVLFGGATLL), 76-96 (WKPTVLYWLMGGTLLVGQLMF), 121-141 (WGWTGFFATMGVLNLWVAYHF), and 149-169 (FKLFGGIGLMFAFVIAQALYL).

It belongs to the YciB family.

It localises to the cell inner membrane. Plays a role in cell envelope biogenesis, maintenance of cell envelope integrity and membrane homeostasis. This Acidovorax ebreus (strain TPSY) (Diaphorobacter sp. (strain TPSY)) protein is Inner membrane-spanning protein YciB.